A 367-amino-acid polypeptide reads, in one-letter code: Peptide chain release factor 2 (367 aa).

Gln-254 is modified (N5-methylglutamine).

It belongs to the prokaryotic/mitochondrial release factor family. Methylated by PrmC. Methylation increases the termination efficiency of RF2.

Its subcellular location is the cytoplasm. Its function is as follows. Peptide chain release factor 2 directs the termination of translation in response to the peptide chain termination codons UGA and UAA. This is Peptide chain release factor 2 from Leptospira borgpetersenii serovar Hardjo-bovis (strain JB197).